The following is a 95-amino-acid chain: Co-chaperonin GroES (95 aa).

It belongs to the GroES chaperonin family. As to quaternary structure, heptamer of 7 subunits arranged in a ring. Interacts with the chaperonin GroEL.

It localises to the cytoplasm. Together with the chaperonin GroEL, plays an essential role in assisting protein folding. The GroEL-GroES system forms a nano-cage that allows encapsulation of the non-native substrate proteins and provides a physical environment optimized to promote and accelerate protein folding. GroES binds to the apical surface of the GroEL ring, thereby capping the opening of the GroEL channel. This chain is Co-chaperonin GroES, found in Ruthia magnifica subsp. Calyptogena magnifica.